The chain runs to 419 residues: Gamma-glutamyl phosphate reductase (419 aa).

The protein belongs to the gamma-glutamyl phosphate reductase family.

Its subcellular location is the cytoplasm. It catalyses the reaction L-glutamate 5-semialdehyde + phosphate + NADP(+) = L-glutamyl 5-phosphate + NADPH + H(+). It functions in the pathway amino-acid biosynthesis; L-proline biosynthesis; L-glutamate 5-semialdehyde from L-glutamate: step 2/2. In terms of biological role, catalyzes the NADPH-dependent reduction of L-glutamate 5-phosphate into L-glutamate 5-semialdehyde and phosphate. The product spontaneously undergoes cyclization to form 1-pyrroline-5-carboxylate. This is Gamma-glutamyl phosphate reductase from Tolumonas auensis (strain DSM 9187 / NBRC 110442 / TA 4).